Here is a 435-residue protein sequence, read N- to C-terminus: Hydrogenobyrinate a,c-diamide synthase (435 aa).

Residues 239–422 (RIGVARDASF…IHFYLPSNPQ (184 aa)) enclose the GATase cobBQ-type domain. Cys-321 serves as the catalytic Nucleophile.

It belongs to the CobB/CbiA family. Mg(2+) is required as a cofactor.

It catalyses the reaction hydrogenobyrinate + 2 L-glutamine + 2 ATP + 2 H2O = hydrogenobyrinate a,c-diamide + 2 L-glutamate + 2 ADP + 2 phosphate + 2 H(+). The protein operates within cofactor biosynthesis; adenosylcobalamin biosynthesis; cob(II)yrinate a,c-diamide from precorrin-2 (aerobic route): step 9/10. In terms of biological role, catalyzes the ATP-dependent amidation of the two carboxylate groups at positions a and c of hydrogenobyrinate, using either L-glutamine or ammonia as the nitrogen source. This chain is Hydrogenobyrinate a,c-diamide synthase, found in Pseudomonas aeruginosa (strain ATCC 15692 / DSM 22644 / CIP 104116 / JCM 14847 / LMG 12228 / 1C / PRS 101 / PAO1).